Consider the following 522-residue polypeptide: Cyclic GMP-AMP synthase (522 aa).

The tract at residues 1–144 is disordered; that stretch reads MQPWHGKAMQ…PPGPWDVPSP (144 aa). DNA-binding regions lie at residues 1–160 and 173–215; these read MQPW…DAAP and KLSR…GSYY. Lysine 7 is modified (N6-acetyllysine). Serine 13 is modified (phosphoserine). N6-acetyllysine is present on lysine 21. Serine 37 bears the Phosphoserine mark. N6-acetyllysine is present on residues lysine 47, lysine 50, lysine 56, lysine 62, and lysine 63. Serine 64 is modified (phosphoserine). Residues 64 to 73 show a composition bias toward basic and acidic residues; it reads SAPDTQERPP. The tract at residues 64 to 75 is required for association with the cell membrane; the sequence is SAPDTQERPPVR. At threonine 68 the chain carries Phosphothreonine. Lysine 82 and lysine 83 each carry N6-acetyllysine. The segment covering 88–97 has biased composition (polar residues); sequence AQDTQPSDAT. Threonine 91 carries the post-translational modification Phosphothreonine. 3 positions are modified to phosphoserine: serine 98, serine 116, and serine 129. The segment covering 98–118 has biased composition (low complexity); it reads SAPGAEGLEPPAAREPALSRA. The tract at residues 120–160 is required for activation upon DNA viral infection; sequence SCRQRGARCSTKPRPPPGPWDVPSPGLPVSAPILVRRDAAP. Lysine 131 bears the N6-lactoyllysine mark. A compositionally biased stretch (pro residues) spans 132–144; the sequence is PRPPPGPWDVPSP. Serine 143 carries the post-translational modification Phosphoserine. A Nuclear export signal motif is present at residues 169-174; that stretch reads LEKLKL. Lysine 173 is covalently cross-linked (Glycyl lysine isopeptide (Lys-Gly) (interchain with G-Cter in ubiquitin)). Aspartate 191 bears the PolyADP-ribosyl aspartic acid mark. Asparagine 210 is modified ((Microbial infection) Deamidated asparagine; by herpes simplex virus 1/HHV-1 UL37). Threonine 211 provides a ligand contact to GTP. Position 213 is a phosphoserine (serine 213). Serine 213 contacts ATP. Tyrosine 215 bears the Phosphotyrosine; by BLK mark. Mg(2+) is bound by residues glutamate 225 and aspartate 227. ATP is bound at residue 225-227; that stretch reads EFD. Aspartate 227 is a 2',3'-cGAMP binding site. Residue lysine 231 forms a Glycyl lysine isopeptide (Lys-Gly) (interchain with G-Cter in SUMO) linkage. Lysine 285 participates in a covalent cross-link: Glycyl lysine isopeptide (Lys-Gly) (interchain with G-Cter in ubiquitin). Residue glutamate 286 is modified to 5-glutamyl polyglutamate. The Nuclear localization signal motif lies at 295–305; that stretch reads DVIMKRKRGGS. The short motif at 299 to 302 is the KRKR-loop element; the sequence is KRKR. A Phosphoserine; by CDK1 and PKB modification is found at serine 305. Residue glutamate 314 is modified to 5-glutamyl glutamate. GTP is bound at residue aspartate 319. Aspartate 319 is a Mg(2+) binding site. Aspartate 319 provides a ligand contact to 2',3'-cGAMP. An interaction with collided ribosomes region spans residues 341–382; sequence QNWLSAKVRKQLRLKPFYLVPKHAKEGNGFQEETWRLSFSHI. Residue lysine 347 forms a Glycyl lysine isopeptide (Lys-Gly) (interchain with G-Cter in SUMO); alternate linkage. A Glycyl lysine isopeptide (Lys-Gly) (interchain with G-Cter in ubiquitin); alternate cross-link involves residue lysine 347. The 2',3'-cGAMP site is built by lysine 362 and arginine 376. 376-383 serves as a coordination point for GTP; the sequence is RLSFSHIE. 380–383 is an ATP binding site; that stretch reads SHIE. N6-acetyllysine is present on lysine 384. A Glycyl lysine isopeptide (Lys-Gly) (interchain with G-Cter in SUMO); alternate cross-link involves residue lysine 384. Residue lysine 384 forms a Glycyl lysine isopeptide (Lys-Gly) (interchain with G-Cter in ubiquitin); alternate linkage. Positions 384–407 are DNA-binding; sequence KEILNNHGKSKTCCENKEEKCCRK. Asparagine 389 is modified ((Microbial infection) Deamidated asparagine; by herpes simplex virus 1/HHV-1 UL37). Histidine 390 contacts Zn(2+). Residues lysine 392 and lysine 394 each carry the N6-acetyllysine modification. Lysine 394 is covalently cross-linked (Glycyl lysine isopeptide (Lys-Gly) (interchain with G-Cter in SUMO)). Cysteine 396, cysteine 397, and cysteine 404 together coordinate Zn(2+). Residues cysteine 404 and cysteine 405 are each lipidated (S-palmitoyl cysteine). Glycyl lysine isopeptide (Lys-Gly) (interchain with G-Cter in ubiquitin) cross-links involve residues lysine 411, lysine 414, lysine 427, and lysine 428. Position 414 is an N6-acetyllysine (lysine 414). An ATP-binding site is contributed by lysine 414. The KKH-loop motif lies at 427–429; that stretch reads KKH. Phosphoserine occurs at positions 434 and 435. 435–439 contacts ATP; it reads SYHVK. A (Microbial infection) Deamidated glutamine; by herpes simplex virus 1/HHV-1 UL37 mark is found at glutamine 451 and glutamine 454. Cysteine 474 carries the S-palmitoyl cysteine lipid modification. Lysine 479 is covalently cross-linked (Glycyl lysine isopeptide (Lys-Gly) (interchain with G-Cter in SUMO); alternate). Lysine 479 participates in a covalent cross-link: Glycyl lysine isopeptide (Lys-Gly) (interchain with G-Cter in ubiquitin); alternate. Lysine 506 carries the N6-methyllysine modification.

Belongs to the mab-21 family. Monomer in the absence of DNA. Homodimer in presence of dsDNA: forms a 2:2 dimer with two enzymes binding to two DNA molecules. Interacts with nucleosomes; interaction is mainly mediated via histones H2A and H2B and inactivates the nucleotidyltransferase activity by blocking DNA-binding and subsequent activation. Interacts with PQBP1 (via WW domain). Interacts with TRIM14; this interaction recruits USP14, leading to deubiquitinate and stabilize CGAS and promote type I interferon production. Interacts with ZCCHC3; promoting sensing of dsDNA by CGAS. Interacts (when not monomethylated) with (poly-ADP-ribosylated) PARP1; interaction takes place in the nucleus and prevents the formation of the PARP1-TIMELESS complex. Interacts (when monomethylated) with SGF29; interaction with SGF29 prevents interaction with PARP1. Interacts with PCBP2; preventing the formation of liquid-like droplets in which CGAS is activated. Interacts with IRGM; promoting CGAS degradation. Interacts with DDX41. In terms of assembly, (Microbial infection) Interacts with herpes virus 8/HHV-8 protein ORF52; this interaction inhibits cGAS enzymatic activity by preventing the formation of liquid-like droplets by CGAS. As to quaternary structure, (Microbial infection) Interacts with herpes simplex virus 1 protein UL37; this interaction deaminates CGAS and inhibits its activation. (Microbial infection) Interacts with vaccinia virus protein OPG067; this interaction promotes CGAS proteasomal degradation. In terms of assembly, (Microbial infection) Interacts with cytomegalovirus protein UL31; this interaction promotes dissociation of DNA from CGAS, thereby inhibiting the enzymatic activity of CGAS. As to quaternary structure, (Microbial infection) Interacts with herpes simplex virus 1 tegument protein VP22 (UL49); this interaction inhibits cGAS enzymatic activity by preventing the formation of liquid-like droplets by CGAS. (Microbial infection) Interacts with herpesvirus 3 tegument protein VP22 (ORF9); this interaction inhibits cGAS enzymatic activity by preventing the formation of liquid-like droplets by CGAS. In terms of assembly, (Microbial infection) Interacts with human cytomegalovirus proteins UL42 and UL83; these interactions result in the inhibition of cGAS-STING signaling. It depends on Mg(2+) as a cofactor. The cofactor is Mn(2+). Requires Zn(2+) as cofactor. In terms of processing, the N-terminal disordered part (1-160) is phosphorylated by AURKB during the G2-M transition, blocking CGAS liquid phase separation and preventing activation. Phosphorylation at Tyr-215 by BLK promotes cytosolic retention. Localizes into the nucleus following dephosphorylation at Tyr-215. Phosphorylation at Ser-435 activates the nucleotidyltransferase activity. Dephosphorylation at Ser-435 by PPP6C impairs its ability to bind GTP, thereby inactivating it. Phosphorylation at Thr-68 and Ser-213 by PRKDC inhibits its cyclic GMP-AMP synthase activity by impairing homodimerization and activation. Phosphorylation at Ser-305 by AKT (AKT1, AKT2 or AKT3) suppresses the nucleotidyltransferase activity. Phosphorylation at Ser-305 by CDK1 during mitosis leads to its inhibition, thereby preventing CGAS activation by self-DNA during mitosis. Dephosphorylated at Ser-305 by protein phosphatase PP1 upon mitotic exit. Ubiquitinated at Lys-414 via 'Lys-48'-linked polyubiquitin chains, leading to its SQSTM1-mediated autophagic degradation. Interaction with TRIM14 promotes recruitment of USP14, leading to deubiquitinate Lys-414 and stabilize CGAS. Ubiquitinated at Lys-173 and Lys-384 by RNF185 via 'Lys-27'-linked polyubiquitination, promoting CGAS cyclic GMP-AMP synthase activity. Monoubiquitination at Lys-347 by TRIM56 promotes oligomerization and subsequent activation. Monoubiquitination by TRIM41 promotes CGAS activation. Ubiquitination at Lys-285 and Lys-479 via 'Lys-48'-linked polyubiquitination promotes its degradation. Deubiquitination at Lys-285 by USP29 promotes its stabilization. Deubiquitinated by USP27X, promoting its stabilization. Ubiquitinated at Lys-411 via 'Lys-63'-linked polyubiquitin chains by MARCHF8, leading to the inhibition of its DNA binding ability. In cycling cells, nucleosome-bound CGAS is ubiquitinated at Lys-427 and Lys-428 via 'Lys-48'-linked polyubiquitin chains by the ECS(SPSB3) complex, leading to its degradation: ubiquitination and degradation of nuclear CGAS during G1 and G2 phases is required to promote low intranuclear CGAS abundance before the next mitotic cycle. Post-translationally, sumoylated at Lys-231 and Lys-479 by TRIM38 in uninfected cells and during the early phase of viral infection, promoting its stability by preventing ubiquitination at Lys-285 and Lys-479, and subsequent degradation. Desumoylated by SENP2 during the late phase of viral infection. Sumoylation at Lys-347, Lys-384 and Lys-394 prevents DNA-binding, oligomerization and nucleotidyltransferase activity. Desumoylation at Lys-347, Lys-384 and Lys-394 by SENP7 relieves inhibition and activates CGAS. In terms of processing, polyglutamylated by TTLL6 at Glu-286, leading to impair DNA-binding activity. Monoglutamylated at Glu-314 by TTLL4, leading to impair the nucleotidyltransferase activity. Deglutamylated by AGBL5/CCP5 and AGBL6/CCP6. Acetylation at Lys-384, Lys-394 and Lys-414 inhibits the cyclic GMP-AMP synthase activity. Deacetylated upon cytosolic DNA challenge such as viral infections. Acetylation can be mediated by aspirin (acetylsalicylate) drug, which directly acetylates CGAS. Acetylation by aspirin efficiently inhibits CGAS-mediated immune responses and is able to suppress self-DNA-induced autoimmunity. Acetylation at Lys-47, Lys-56, Lys-62 and Lys-83 by KAT5 increases the cyclic GMP-AMP synthase activity by promoting DNA-binding and subsequent activation. Post-translationally, proteolytically cleaved by apoptotic caspases during apoptosis, leading to its inactivation. The damage of the nucleus and the mitochondria during apoptosis leads to leakage of nuclear and mitochondrial DNA, which activate CGAS: cleavage and inactivation during apoptosis in required to prevent cytokine overproduction. Cleaved by CASP3 at Asp-319 during virus-induced apoptosis, thereby inactivating it and preventing cytokine overproduction. Cleaved by CASP1 at Asp-140 and Asp-157 upon DNA virus infection; the cleavage impairs cGAMP production. Also cleaved by the pyroptotic CASP4 and CASP5 during non-canonical inflammasome activation; they don't cut at the same sites than CASP1. In terms of processing, degraded via selective autophagy following interaction with IRGM. IRGM promotes CGAS recruitment to autophagosome membranes, promoting its SQSTM1/p62-dependent autophagic degradation. Poly-ADP-ribosylation at Asp-191 by PARP1 impairs DNA-binding, thereby preventing the cyclic GMP-AMP synthase activity. Post-translationally, palmitoylation at Cys-474 by ZDHHC18 impairs DNA-binding, thereby preventing the cyclic GMP-AMP synthase activity. Palmitoylation at Cys-404 and Cys-405 by ZDHHC9 promotes homodimerization and cyclic GMP-AMP synthase activity. Depalmitoylation at Cys-404 and Cys-405 by LYPLAL1 impairs homodimerization and cyclic GMP-AMP synthase activity. In terms of processing, monomethylated at Lys-506 by SETD7. Monomethylation promotes interaction with SGF29, preventing interaction between PARP1 nad SGF29. Demethylation by RIOX1 promotes interaction with PARP1, followed by PARP1 inactivation. Lactylation by AARS2 prevents ability to undergo liquid-liquid phase separation (LLPS), thereby inhibiting CGAS activation. Post-translationally, (Microbial infection) Deamidated on 'Asn-210' by herpes simplex virus 1 protein UL37. This modification significantly reduces CGAS-dependent cGAMP production and innate immune signaling induced by dsDNA. In terms of processing, (Microbial infection) Degraded by an autophagy-mediated mechanism in presence of Chikungunya virus capsid protein. As to expression, expressed in the monocytic cell line THP1.

Its subcellular location is the nucleus. It localises to the chromosome. The protein localises to the cell membrane. The protein resides in the cytoplasm. It is found in the cytosol. The catalysed reaction is GTP + ATP = 2',3'-cGAMP + 2 diphosphate. It carries out the reaction GTP + ATP = pppGp(2'-5')A + diphosphate. The enzyme catalyses pppGp(2'-5')A = 2',3'-cGAMP + diphosphate. With respect to regulation, the enzyme activity is strongly increased by double-stranded DNA (dsDNA), but not by single-stranded DNA or RNA. DNA-binding induces the formation of liquid-like droplets in which CGAS is activated. Liquid-like droplets also create a selective environment that restricts entry of negative regulators, such as TREX1 or BANF1/BAF, allowing sensing of DNA. A number of mechanisms exist to restrict its activity toward self-DNA. The nucleotidyltransferase activity is inhibited in the nucleus via its association with nucleosomes: interacts with the acidic patch of histones H2A and H2B, thereby blocking DNA-binding and subsequent activation. CGAS is also inactive when associated with mitotic chromatin. Chromatin-bound CGAS cannot be activated by exogenous DNA in mitotic cells: phosphorylation of the N-terminal disordered part by AURKB during the G2-M transition blocks CGAS liquid phase separation and activation. Activity toward self-DNA is inhibited by BANF1/BAF upon acute loss of nuclear membrane integrity: BANF1/BAF acts by outcompeting CGAS for DNA-binding, thereby preventing CGAS activation. DNA-induced activation at micronuclei is also limited by TREX1, which degrades micronuclear DNA upon nuclear envelope rupture, thereby preventing CGAS activation. CGAS can be released from nucleosomes and activated by MRE11 component of the MRN complex, which displaces CGAS from acidic-patch-mediated sequestration. Acetylation at Lys-384, Lys-394 and Lys-414 inhibits the cyclic GMP-AMP synthase activity. Inhibited by aspirin (acetylsalicylate) drug, which acetylates CGAS. Acetylation by KAT5 increases the cyclic GMP-AMP synthase activity by promoting DNA-binding and subsequent activation. Phosphorylation at Ser-305 suppresses the nucleotidyltransferase activity. Phosphorylation at Ser-435 promotes the cyclic GMP-AMP synthase activity. Phosphorylation at Thr-68 and Ser-213 inhibits its cyclic GMP-AMP synthase activity. Ubiquitination at Lys-173 and Lys-384 via 'Lys-27'-linked polyubiquitination enhances the cyclic GMP-AMP synthase activity. Monoubiquitination at Lys-347 promotes oligomerization and subsequent activation. Sumoylation at Lys-347, Lys-384 and Lys-394 prevents DNA-binding, oligomerization and nucleotidyltransferase activity. The enzyme activity is impaired by the cleavage at Asp-140 and Asp-157 produced by CASP1. In addition to DNA, also activated by collided ribosomes upon translation stress: specifically binds collided ribosomes, promoting its activation and triggering type-I interferon production. Strongly inhibited by compound PF-06928215, which is specific for human protein. Inhibited by small-molecule inhibitors with a pyridoindole tricyclic core G108, G140 and G150. Its activity is regulated as follows. (Microbial infection) Nucleotidyltransferase activity is inhibited by different herpesvirus tegument proteins (Herpes simplex virus 1 tegument protein VP22, herpes virus 8 protein ORF52 and herpesvirus 3 tegument protein VP22/ORF9). Viral tegument proteins act by disrupting liquid-like droplets in which CGAS is activated, thereby preventing CGAS activity. Functionally, nucleotidyltransferase that catalyzes the formation of cyclic GMP-AMP (2',3'-cGAMP) from ATP and GTP and plays a key role in innate immunity. Catalysis involves both the formation of a 2',5' phosphodiester linkage at the GpA step and the formation of a 3',5' phosphodiester linkage at the ApG step, producing c[G(2',5')pA(3',5')p]. Acts as a key DNA sensor: directly binds double-stranded DNA (dsDNA), inducing the formation of liquid-like droplets in which CGAS is activated, leading to synthesis of 2',3'-cGAMP, a second messenger that binds to and activates STING1, thereby triggering type-I interferon production. Preferentially recognizes and binds curved long dsDNAs of a minimal length of 40 bp. Acts as a key foreign DNA sensor, the presence of double-stranded DNA (dsDNA) in the cytoplasm being a danger signal that triggers the immune responses. Has antiviral activity by sensing the presence of dsDNA from DNA viruses in the cytoplasm. Also acts as an innate immune sensor of infection by retroviruses, such as HIV-2, by detecting the presence of reverse-transcribed DNA in the cytosol. In contrast, HIV-1 is poorly sensed by CGAS, due to its capsid that cloaks viral DNA from CGAS detection. Detection of retroviral reverse-transcribed DNA in the cytosol may be indirect and be mediated via interaction with PQBP1, which directly binds reverse-transcribed retroviral DNA. Also detects the presence of DNA from bacteria, such as M.tuberculosis. 2',3'-cGAMP can be transferred from producing cells to neighboring cells through gap junctions, leading to promote STING1 activation and convey immune response to connecting cells. 2',3'-cGAMP can also be transferred between cells by virtue of packaging within viral particles contributing to IFN-induction in newly infected cells in a cGAS-independent but STING1-dependent manner. Also senses the presence of neutrophil extracellular traps (NETs) that are translocated to the cytosol following phagocytosis, leading to synthesis of 2',3'-cGAMP. In addition to foreign DNA, can also be activated by endogenous nuclear or mitochondrial DNA. When self-DNA leaks into the cytosol during cellular stress (such as mitochondrial stress, SARS-CoV-2 infection causing severe COVID-19 disease, DNA damage, mitotic arrest or senescence), or is present in form of cytosolic micronuclei, CGAS is activated leading to a state of sterile inflammation. Acts as a regulator of cellular senescence by binding to cytosolic chromatin fragments that are present in senescent cells, leading to trigger type-I interferon production via STING1 and promote cellular senescence. Also involved in the inflammatory response to genome instability and double-stranded DNA breaks: acts by localizing to micronuclei arising from genome instability. Micronuclei, which are frequently found in cancer cells, consist of chromatin surrounded by their own nuclear membrane: following breakdown of the micronuclear envelope, a process associated with chromothripsis, CGAS binds self-DNA exposed to the cytosol, leading to 2',3'-cGAMP synthesis and subsequent activation of STING1 and type-I interferon production. Activated in response to prolonged mitotic arrest, promoting mitotic cell death. In a healthy cell, CGAS is however kept inactive even in cellular events that directly expose it to self-DNA, such as mitosis, when cGAS associates with chromatin directly after nuclear envelope breakdown or remains in the form of postmitotic persistent nuclear cGAS pools bound to chromatin. Nuclear CGAS is inactivated by chromatin via direct interaction with nucleosomes, which block CGAS from DNA binding and thus prevent CGAS-induced autoimmunity. Also acts as a suppressor of DNA repair in response to DNA damage: inhibits homologous recombination repair by interacting with PARP1, the CGAS-PARP1 interaction leading to impede the formation of the PARP1-TIMELESS complex. In addition to DNA, also sense translation stress: in response to translation stress, translocates to the cytosol and associates with collided ribosomes, promoting its activation and triggering type-I interferon production. In contrast to other mammals, human CGAS displays species-specific mechanisms of DNA recognition and produces less 2',3'-cGAMP, allowing a more fine-tuned response to pathogens. The sequence is that of Cyclic GMP-AMP synthase from Homo sapiens (Human).